We begin with the raw amino-acid sequence, 84 residues long: Sulfur carrier protein TusA (84 aa).

The active-site Cysteine persulfide intermediate is the cysteine 19.

This sequence belongs to the sulfur carrier protein TusA family. In terms of assembly, interacts with IscS.

The protein resides in the cytoplasm. The protein operates within tRNA modification. Functionally, sulfur carrier protein involved in sulfur trafficking in the cell. Part of a sulfur-relay system required for 2-thiolation during synthesis of 2-thiouridine of the modified wobble base 5-methylaminomethyl-2-thiouridine (mnm(5)s(2)U) in tRNA. Interacts with IscS and stimulates its cysteine desulfurase activity. Accepts an activated sulfur from IscS, which is then transferred to TusD, and thus determines the direction of sulfur flow from IscS to 2-thiouridine formation. Also appears to be involved in sulfur transfer for the biosynthesis of molybdopterin. The chain is Sulfur carrier protein TusA from Yersinia pseudotuberculosis serotype O:1b (strain IP 31758).